A 161-amino-acid chain; its full sequence is UPF0262 protein Meso_0189 (161 aa).

This sequence belongs to the UPF0262 family.

In Chelativorans sp. (strain BNC1), this protein is UPF0262 protein Meso_0189.